Consider the following 666-residue polypeptide: Long-chain-fatty-acid--CoA ligase ACSBG2 (666 aa).

Residues 230 to 238 (TSGTTGIPK), 418 to 423 (ELYGLS), Asp-496, and Arg-624 each bind ATP.

It belongs to the ATP-dependent AMP-binding enzyme family. Bubblegum subfamily. As to expression, testis-specific.

Its subcellular location is the cytoplasm. The protein resides in the membrane. The catalysed reaction is a long-chain fatty acid + ATP + CoA = a long-chain fatty acyl-CoA + AMP + diphosphate. It carries out the reaction (5Z,8Z,11Z,14Z)-eicosatetraenoate + ATP + CoA = (5Z,8Z,11Z,14Z)-eicosatetraenoyl-CoA + AMP + diphosphate. The enzyme catalyses hexadecanoate + ATP + CoA = hexadecanoyl-CoA + AMP + diphosphate. It catalyses the reaction (9Z)-octadecenoate + ATP + CoA = (9Z)-octadecenoyl-CoA + AMP + diphosphate. The catalysed reaction is (9Z,12Z)-octadecadienoate + ATP + CoA = (9Z,12Z)-octadecadienoyl-CoA + AMP + diphosphate. It carries out the reaction tetracosanoate + ATP + CoA = tetracosanoyl-CoA + AMP + diphosphate. In terms of biological role, catalyzes the conversion of fatty acids such as long chain and very long-chain fatty acids to their active form acyl-CoAs for both synthesis of cellular lipids, and degradation via beta-oxidation. Can activate diverse saturated, monosaturated and polyunsaturated fatty acids. Has increased ability to activate oleic and linoleic acid. May play a role in spermatogenesis. The sequence is that of Long-chain-fatty-acid--CoA ligase ACSBG2 from Homo sapiens (Human).